A 447-amino-acid polypeptide reads, in one-letter code: Chromosomal replication initiator protein DnaA (447 aa).

Residues 1-74 are domain I, interacts with DnaA modulators; that stretch reads MENIEELWSA…MLLEVTGSEL (74 aa). The tract at residues 74–108 is domain II; sequence LNTKFIIPDSLEEIEEQKPMPKPKQSTDTGDSPKS. Residues 85–107 form a disordered region; the sequence is EEIEEQKPMPKPKQSTDTGDSPK. Residues 97–107 show a composition bias toward polar residues; that stretch reads KQSTDTGDSPK. A domain III, AAA+ region region spans residues 109–325; it reads MLNSKYTFDT…GALIRVVAYS (217 aa). Residues Gly-153, Gly-155, Lys-156, and Thr-157 each coordinate ATP. The tract at residues 326–447 is domain IV, binds dsDNA; that stretch reads SLVNQDIDAS…EELKEKLKSI (122 aa).

It belongs to the DnaA family. As to quaternary structure, oligomerizes as a right-handed, spiral filament on DNA at oriC.

It is found in the cytoplasm. In terms of biological role, plays an essential role in the initiation and regulation of chromosomal replication. ATP-DnaA binds to the origin of replication (oriC) to initiate formation of the DNA replication initiation complex once per cell cycle. Binds the DnaA box (a 9 base pair repeat at the origin) and separates the double-stranded (ds)DNA. Forms a right-handed helical filament on oriC DNA; dsDNA binds to the exterior of the filament while single-stranded (ss)DNA is stabiized in the filament's interior. The ATP-DnaA-oriC complex binds and stabilizes one strand of the AT-rich DNA unwinding element (DUE), permitting loading of DNA polymerase. After initiation quickly degrades to an ADP-DnaA complex that is not apt for DNA replication. Binds acidic phospholipids. The polypeptide is Chromosomal replication initiator protein DnaA (Oceanobacillus iheyensis (strain DSM 14371 / CIP 107618 / JCM 11309 / KCTC 3954 / HTE831)).